Consider the following 215-residue polypeptide: Cytochrome c biogenesis ATP-binding export protein CcmA (215 aa).

Positions 7–209 (LKIDRLACQR…ALTVLNLAQY (203 aa)) constitute an ABC transporter domain. Residue 39-46 (GHNGIGKT) participates in ATP binding.

It belongs to the ABC transporter superfamily. CcmA exporter (TC 3.A.1.107) family. The complex is composed of two ATP-binding proteins (CcmA) and two transmembrane proteins (CcmB).

The protein localises to the cell inner membrane. It catalyses the reaction heme b(in) + ATP + H2O = heme b(out) + ADP + phosphate + H(+). Part of the ABC transporter complex CcmAB involved in the biogenesis of c-type cytochromes; once thought to export heme, this seems not to be the case, but its exact role is uncertain. Responsible for energy coupling to the transport system. The chain is Cytochrome c biogenesis ATP-binding export protein CcmA from Mannheimia succiniciproducens (strain KCTC 0769BP / MBEL55E).